A 175-amino-acid chain; its full sequence is uncharacterized protein (175 aa).

The next 5 helical transmembrane spans lie at 25–45 (MIAI…TTIS), 46–66 (ATGP…FFLL), 97–117 (FAGW…LTAV), 124–144 (WLPG…LTLL), and 155–175 (TEFW…VTGI).

This sequence belongs to the amino acid-polyamine-organocation (APC) superfamily.

The protein localises to the cell membrane. This is an uncharacterized protein from Lactobacillus delbrueckii subsp. lactis.